Reading from the N-terminus, the 310-residue chain is MSTGTGSLTALQDCGVLQQKVPLAEFTTWRVGGPAQWLAEPTSTEQIPELLQWARERRLPVHMIGAGSNLLIADGGLPGLTLCLRRLQGSALNADTGRVRAAAGEPLPTLARRAAKAGLQGLEWAVGIPGTVGGAAVMNAGAQGGCTAEQLISVDVIRFSDAQPSLATLSRDELAFSYRHSALQSNRHLVVAAEFQLEPGHDPAELQRLTSGNLNHRTSTQPYKLPSCGSVFRNPEPEKAGRLIESLGLKGRAIGGAQVSELHANFIVNTGDASANDIRALISLVQGEVMEAKGIALHPEVKRLGFETPD.

Residues 30-200 form the FAD-binding PCMH-type domain; the sequence is RVGGPAQWLA…VAAEFQLEPG (171 aa). Residue Arg-179 is part of the active site. Ser-230 (proton donor) is an active-site residue. Residue Glu-300 is part of the active site.

The protein belongs to the MurB family. FAD is required as a cofactor.

Its subcellular location is the cytoplasm. The enzyme catalyses UDP-N-acetyl-alpha-D-muramate + NADP(+) = UDP-N-acetyl-3-O-(1-carboxyvinyl)-alpha-D-glucosamine + NADPH + H(+). It participates in cell wall biogenesis; peptidoglycan biosynthesis. Cell wall formation. This chain is UDP-N-acetylenolpyruvoylglucosamine reductase, found in Synechococcus sp. (strain WH7803).